We begin with the raw amino-acid sequence, 280 residues long: Probable endonuclease 4 (280 aa).

Positions 69, 109, 145, 179, 182, 216, 229, 231, and 261 each coordinate Zn(2+).

It belongs to the AP endonuclease 2 family. Requires Zn(2+) as cofactor.

The catalysed reaction is Endonucleolytic cleavage to 5'-phosphooligonucleotide end-products.. Functionally, endonuclease IV plays a role in DNA repair. It cleaves phosphodiester bonds at apurinic or apyrimidinic (AP) sites, generating a 3'-hydroxyl group and a 5'-terminal sugar phosphate. The polypeptide is Probable endonuclease 4 (Erwinia tasmaniensis (strain DSM 17950 / CFBP 7177 / CIP 109463 / NCPPB 4357 / Et1/99)).